The following is a 127-amino-acid chain: uncharacterized protein (127 aa).

Helical transmembrane passes span 64–84 and 101–118; these read GYYITNLICIVVGLFLYFGYL and FFHFFFTILAVTSRAIYY.

Its subcellular location is the membrane. This is an uncharacterized protein from Saccharomyces cerevisiae (strain ATCC 204508 / S288c) (Baker's yeast).